The following is a 64-amino-acid chain: Prokaryotic ubiquitin-like protein Pup (64 aa).

The tract at residues 1 to 36 is disordered; the sequence is MAQEQTKRGGGGGDDEDVTGTTAAGQERRKKLAQDT. The segment at 21–58 is ARC ATPase binding; the sequence is TTAAGQERRKKLAQDTDDLLDEIDDVLEENAEDFVRAY. Residues 26-52 adopt a coiled-coil conformation; sequence QERRKKLAQDTDDLLDEIDDVLEENAE. Gln-64 is subject to Deamidated glutamine. Gln-64 is covalently cross-linked (Isoglutamyl lysine isopeptide (Gln-Lys) (interchain with K-? in acceptor proteins)).

It belongs to the prokaryotic ubiquitin-like protein family. Strongly interacts with the proteasome-associated ATPase ARC through a hydrophobic interface; the interacting region of Pup lies in its C-terminal half. There is one Pup binding site per ARC hexamer ring. Post-translationally, is modified by deamidation of its C-terminal glutamine to glutamate by the deamidase Dop, a prerequisite to the subsequent pupylation process.

The protein operates within protein degradation; proteasomal Pup-dependent pathway. In terms of biological role, protein modifier that is covalently attached to lysine residues of substrate proteins, thereby targeting them for proteasomal degradation. The tagging system is termed pupylation. This is Prokaryotic ubiquitin-like protein Pup from Mycobacterium ulcerans (strain Agy99).